The sequence spans 300 residues: Protein phosphatase 2C 1 (300 aa).

A PPM-type phosphatase domain is found at 23 to 298 (IFAASEMQGW…DNMTTILVYL (276 aa)). Residues Asp-57, Gly-58, Asp-237, and Asp-289 each contribute to the Mn(2+) site.

Belongs to the PP2C family. Mg(2+) is required as a cofactor. It depends on Mn(2+) as a cofactor. The N-terminus is blocked.

The protein localises to the membrane. The catalysed reaction is O-phospho-L-seryl-[protein] + H2O = L-seryl-[protein] + phosphate. It catalyses the reaction O-phospho-L-threonyl-[protein] + H2O = L-threonyl-[protein] + phosphate. Its function is as follows. Serine and threonine phosphatase. This is Protein phosphatase 2C 1 from Paramecium tetraurelia.